A 396-amino-acid polypeptide reads, in one-letter code: MSLYLKAEKIQSWRVLIMACAGFIFNTTEFVPVAMLSDIAQSFDMQTADTGLMMTVYAWTVLIMSLPAMLATGNMERKSLLIKLFIIFIVGHILSVIAWNFWILLLARMCIALAHSVFWSITASLVMRISPKHKKTQALGMLAIGTALATILGLPIGRIVGQLVGWRVTFGIIAVLALSIMFLIIRLLPNLPSKNAGSIASLPLLAKRPLLLWLYVTTAIVISAHFTAYTYIEPFMIDVGHLDPNFATAVLLVFGFSGIAASLLFNRLYRFAPTKFIVVSMSLLMFSLLLLLFSTKTIIAMFSLVFIWGIGISCIGLSLQMRVLKLAPDATDVATAIYSGIFNAGIGAGALFGNLATTYLGLNEIGYTGAALGLIGFIIFITTHLKYRHTFLLQNK.

Transmembrane regions (helical) follow at residues 15–35 (VLIMACAGFIFNTTEFVPVAM), 51–71 (GLMMTVYAWTVLIMSLPAMLA), 84–104 (LFIIFIVGHILSVIAWNFWIL), 109–129 (MCIALAHSVFWSITASLVMRI), 137–157 (QALGMLAIGTALATILGLPIG), 168–188 (VTFGIIAVLALSIMFLIIRLL), 209–229 (PLLLWLYVTTAIVISAHFTAY), 245–265 (NFATAVLLVFGFSGIAASLLF), 273–293 (PTKFIVVSMSLLMFSLLLLLF), 297–317 (TIIAMFSLVFIWGIGISCIGL), 333–353 (VATAIYSGIFNAGIGAGALFG), and 365–385 (IGYTGAALGLIGFIIFITTHL).

It belongs to the major facilitator superfamily. SotB (TC 2.A.1.2) family.

The protein resides in the cell inner membrane. Its function is as follows. Involved in the efflux of sugars. The physiological role may be the reduction of the intracellular concentration of toxic sugars or sugar metabolites. The polypeptide is Probable sugar efflux transporter (Haemophilus influenzae (strain ATCC 51907 / DSM 11121 / KW20 / Rd)).